The chain runs to 560 residues: Dihydroxy-acid dehydratase (560 aa).

C52 contributes to the [2Fe-2S] cluster binding site. D84 provides a ligand contact to Mg(2+). Residue C125 coordinates [2Fe-2S] cluster. The Mg(2+) site is built by D126 and K127. K127 bears the N6-carboxylysine mark. C197 contributes to the [2Fe-2S] cluster binding site. Position 448 (E448) interacts with Mg(2+). The active-site Proton acceptor is S474.

It belongs to the IlvD/Edd family. Homodimer. It depends on [2Fe-2S] cluster as a cofactor. The cofactor is Mg(2+).

The enzyme catalyses (2R)-2,3-dihydroxy-3-methylbutanoate = 3-methyl-2-oxobutanoate + H2O. It catalyses the reaction (2R,3R)-2,3-dihydroxy-3-methylpentanoate = (S)-3-methyl-2-oxopentanoate + H2O. The protein operates within amino-acid biosynthesis; L-isoleucine biosynthesis; L-isoleucine from 2-oxobutanoate: step 3/4. Its pathway is amino-acid biosynthesis; L-valine biosynthesis; L-valine from pyruvate: step 3/4. Functions in the biosynthesis of branched-chain amino acids. Catalyzes the dehydration of (2R,3R)-2,3-dihydroxy-3-methylpentanoate (2,3-dihydroxy-3-methylvalerate) into 2-oxo-3-methylpentanoate (2-oxo-3-methylvalerate) and of (2R)-2,3-dihydroxy-3-methylbutanoate (2,3-dihydroxyisovalerate) into 2-oxo-3-methylbutanoate (2-oxoisovalerate), the penultimate precursor to L-isoleucine and L-valine, respectively. This Francisella tularensis subsp. tularensis (strain WY96-3418) protein is Dihydroxy-acid dehydratase.